Consider the following 79-residue polypeptide: PRKGKEKKEEQVISLGPQVAEGENVFGVCHIFASPNDTFVHVTDLSGXESICRVTGGMKMKADRXEXSPYXAMLAAQAV.

A Phosphoserine modification is found at Ser-14. Glycyl lysine isopeptide (Lys-Gly) (interchain with G-Cter in SUMO2) cross-links involve residues Lys-59 and Lys-61.

Belongs to the universal ribosomal protein uS11 family. In terms of assembly, component of the small ribosomal subunit. Part of the small subunit (SSU) processome, composed of more than 70 proteins and the RNA chaperone small nucleolar RNA (snoRNA) U3.

It is found in the cytoplasm. The protein resides in the nucleus. It localises to the nucleolus. Component of the small ribosomal subunit. The ribosome is a large ribonucleoprotein complex responsible for the synthesis of proteins in the cell. Part of the small subunit (SSU) processome, first precursor of the small eukaryotic ribosomal subunit. During the assembly of the SSU processome in the nucleolus, many ribosome biogenesis factors, an RNA chaperone and ribosomal proteins associate with the nascent pre-rRNA and work in concert to generate RNA folding, modifications, rearrangements and cleavage as well as targeted degradation of pre-ribosomal RNA by the RNA exosome. The protein is Small ribosomal subunit protein uS11 (RPS14) of Sus scrofa (Pig).